The primary structure comprises 321 residues: Nucleotide-binding protein LI0459 (321 aa).

Residue 41–48 coordinates ATP; the sequence is GMSGAGKS.

This sequence belongs to the RapZ-like family.

Its function is as follows. Displays ATPase and GTPase activities. This chain is Nucleotide-binding protein LI0459, found in Lawsonia intracellularis (strain PHE/MN1-00).